The sequence spans 511 residues: Chromosomal replication initiator protein DnaA (511 aa).

Residues Met-1–Pro-90 form a domain I, interacts with DnaA modulators region. The domain II stretch occupies residues Asn-91–Ser-174. A disordered region spans residues Thr-125–Gln-161. The segment at Tyr-175–Ser-391 is domain III, AAA+ region. 4 residues coordinate ATP: Gly-219, Gly-221, Lys-222, and Thr-223. The domain IV, binds dsDNA stretch occupies residues His-392 to Thr-511.

The protein belongs to the DnaA family. As to quaternary structure, oligomerizes as a right-handed, spiral filament on DNA at oriC.

It is found in the cytoplasm. Plays an essential role in the initiation and regulation of chromosomal replication. ATP-DnaA binds to the origin of replication (oriC) to initiate formation of the DNA replication initiation complex once per cell cycle. Binds the DnaA box (a 9 base pair repeat at the origin) and separates the double-stranded (ds)DNA. Forms a right-handed helical filament on oriC DNA; dsDNA binds to the exterior of the filament while single-stranded (ss)DNA is stabiized in the filament's interior. The ATP-DnaA-oriC complex binds and stabilizes one strand of the AT-rich DNA unwinding element (DUE), permitting loading of DNA polymerase. After initiation quickly degrades to an ADP-DnaA complex that is not apt for DNA replication. Binds acidic phospholipids. The sequence is that of Chromosomal replication initiator protein DnaA from Pseudomonas putida (strain W619).